The primary structure comprises 945 residues: Isoleucine--tRNA ligase (945 aa).

The 'HIGH' region signature appears at 66–76 (PYANGDIHLGH). Glutamate 581 contributes to the L-isoleucyl-5'-AMP binding site. The 'KMSKS' region motif lies at 622–626 (KMSKS). Lysine 625 lines the ATP pocket. The Zn(2+) site is built by cysteine 908, cysteine 911, cysteine 928, and cysteine 931.

The protein belongs to the class-I aminoacyl-tRNA synthetase family. IleS type 1 subfamily. In terms of assembly, monomer. Zn(2+) is required as a cofactor.

The protein localises to the cytoplasm. The enzyme catalyses tRNA(Ile) + L-isoleucine + ATP = L-isoleucyl-tRNA(Ile) + AMP + diphosphate. Catalyzes the attachment of isoleucine to tRNA(Ile). As IleRS can inadvertently accommodate and process structurally similar amino acids such as valine, to avoid such errors it has two additional distinct tRNA(Ile)-dependent editing activities. One activity is designated as 'pretransfer' editing and involves the hydrolysis of activated Val-AMP. The other activity is designated 'posttransfer' editing and involves deacylation of mischarged Val-tRNA(Ile). This chain is Isoleucine--tRNA ligase, found in Burkholderia cenocepacia (strain ATCC BAA-245 / DSM 16553 / LMG 16656 / NCTC 13227 / J2315 / CF5610) (Burkholderia cepacia (strain J2315)).